Here is a 489-residue protein sequence, read N- to C-terminus: Glutamyl-tRNA(Gln) amidotransferase subunit A (489 aa).

Catalysis depends on charge relay system residues Lys-77 and Ser-152. The active-site Acyl-ester intermediate is the Ser-176.

The protein belongs to the amidase family. GatA subfamily. As to quaternary structure, heterotrimer of A, B and C subunits.

The enzyme catalyses L-glutamyl-tRNA(Gln) + L-glutamine + ATP + H2O = L-glutaminyl-tRNA(Gln) + L-glutamate + ADP + phosphate + H(+). Allows the formation of correctly charged Gln-tRNA(Gln) through the transamidation of misacylated Glu-tRNA(Gln) in organisms which lack glutaminyl-tRNA synthetase. The reaction takes place in the presence of glutamine and ATP through an activated gamma-phospho-Glu-tRNA(Gln). The chain is Glutamyl-tRNA(Gln) amidotransferase subunit A from Levilactobacillus brevis (strain ATCC 367 / BCRC 12310 / CIP 105137 / JCM 1170 / LMG 11437 / NCIMB 947 / NCTC 947) (Lactobacillus brevis).